The primary structure comprises 252 residues: Eukaryotic translation initiation factor 3 subunit K (252 aa).

The PCI domain occupies 46–225 (FDCYANLALL…VKVPTNKENE (180 aa)).

The protein belongs to the eIF-3 subunit K family. Component of the eukaryotic translation initiation factor 3 (eIF-3) complex.

Its subcellular location is the cytoplasm. Component of the eukaryotic translation initiation factor 3 (eIF-3) complex, which is involved in protein synthesis of a specialized repertoire of mRNAs and, together with other initiation factors, stimulates binding of mRNA and methionyl-tRNAi to the 40S ribosome. The eIF-3 complex specifically targets and initiates translation of a subset of mRNAs involved in cell proliferation. The protein is Eukaryotic translation initiation factor 3 subunit K of Aspergillus terreus (strain NIH 2624 / FGSC A1156).